The primary structure comprises 241 residues: Small ribosomal subunit protein uS2 (241 aa).

The protein belongs to the universal ribosomal protein uS2 family.

This chain is Small ribosomal subunit protein uS2, found in Salmonella choleraesuis (strain SC-B67).